We begin with the raw amino-acid sequence, 120 residues long: NAD(P)H-quinone oxidoreductase subunit 3, chloroplastic (120 aa).

3 helical membrane passes run tyrosine 7–isoleucine 27, methionine 64–methionine 84, and isoleucine 88–leucine 108.

It belongs to the complex I subunit 3 family. NDH is composed of at least 16 different subunits, 5 of which are encoded in the nucleus.

It localises to the plastid. The protein resides in the chloroplast thylakoid membrane. It carries out the reaction a plastoquinone + NADH + (n+1) H(+)(in) = a plastoquinol + NAD(+) + n H(+)(out). The enzyme catalyses a plastoquinone + NADPH + (n+1) H(+)(in) = a plastoquinol + NADP(+) + n H(+)(out). In terms of biological role, NDH shuttles electrons from NAD(P)H:plastoquinone, via FMN and iron-sulfur (Fe-S) centers, to quinones in the photosynthetic chain and possibly in a chloroplast respiratory chain. The immediate electron acceptor for the enzyme in this species is believed to be plastoquinone. Couples the redox reaction to proton translocation, and thus conserves the redox energy in a proton gradient. The polypeptide is NAD(P)H-quinone oxidoreductase subunit 3, chloroplastic (Cryptomeria japonica (Japanese cedar)).